The following is a 144-amino-acid chain: Large ribosomal subunit protein uL15 (144 aa).

A disordered region spans residues 1–53 (MYLNTLAPAEGAKHSAKRLGRGIGSGLGKTGGRGHKGQKSRTGGGVRRGFEGG). Residues 21–31 (RGIGSGLGKTG) show a composition bias toward gly residues.

It belongs to the universal ribosomal protein uL15 family. In terms of assembly, part of the 50S ribosomal subunit.

In terms of biological role, binds to the 23S rRNA. The chain is Large ribosomal subunit protein uL15 from Mannheimia succiniciproducens (strain KCTC 0769BP / MBEL55E).